Here is a 338-residue protein sequence, read N- to C-terminus: GDSL esterase/lipase At5g63170 (338 aa).

A signal peptide spans 1–23 (MNSLVIQTTIVLVSVISVSIVHA). The active-site Nucleophile is Ser-35. Residues Asp-313 and His-316 contribute to the active site.

This sequence belongs to the 'GDSL' lipolytic enzyme family.

The protein resides in the secreted. This is GDSL esterase/lipase At5g63170 from Arabidopsis thaliana (Mouse-ear cress).